Consider the following 183-residue polypeptide: ATP synthase subunit delta, chloroplastic (183 aa).

The protein belongs to the ATPase delta chain family. In terms of assembly, F-type ATPases have 2 components, F(1) - the catalytic core - and F(0) - the membrane proton channel. F(1) has five subunits: alpha(3), beta(3), gamma(1), delta(1), epsilon(1). CF(0) has four main subunits: a(1), b(1), b'(1) and c(10-14). The alpha and beta chains form an alternating ring which encloses part of the gamma chain. F(1) is attached to F(0) by a central stalk formed by the gamma and epsilon chains, while a peripheral stalk is formed by the delta, b and b' chains.

It localises to the plastid. Its subcellular location is the chloroplast thylakoid membrane. Functionally, f(1)F(0) ATP synthase produces ATP from ADP in the presence of a proton or sodium gradient. F-type ATPases consist of two structural domains, F(1) containing the extramembraneous catalytic core and F(0) containing the membrane proton channel, linked together by a central stalk and a peripheral stalk. During catalysis, ATP synthesis in the catalytic domain of F(1) is coupled via a rotary mechanism of the central stalk subunits to proton translocation. Its function is as follows. This protein is part of the stalk that links CF(0) to CF(1). It either transmits conformational changes from CF(0) to CF(1) or is implicated in proton conduction. This Cyanidium caldarium (Red alga) protein is ATP synthase subunit delta, chloroplastic.